The chain runs to 207 residues: Peptidyl-prolyl cis-trans isomerase FKBP16-1, chloroplastic (207 aa).

Residues 104–207 (GDLVELNYVC…VFEIQLLKVL (104 aa)) enclose the PPIase FKBP-type domain.

The protein belongs to the FKBP-type PPIase family.

Its subcellular location is the plastid. The protein localises to the chloroplast thylakoid lumen. The catalysed reaction is [protein]-peptidylproline (omega=180) = [protein]-peptidylproline (omega=0). In terms of biological role, PPIases accelerate the folding of proteins. It catalyzes the cis-trans isomerization of proline imidic peptide bonds in oligopeptides. The protein is Peptidyl-prolyl cis-trans isomerase FKBP16-1, chloroplastic (FKBP16-1) of Arabidopsis thaliana (Mouse-ear cress).